Consider the following 427-residue polypeptide: Flotillin-1 (427 aa).

Ser-19, Ser-163, and Ser-385 each carry phosphoserine. Thr-387 bears the Phosphothreonine mark.

It belongs to the band 7/mec-2 family. Flotillin subfamily. As to quaternary structure, heterooligomeric complex of flotillin-1 and flotillin-2 and caveolin-1 and caveolin-2. Interacts with ECPAS.

The protein resides in the cell membrane. The protein localises to the endosome. It localises to the membrane. Its subcellular location is the caveola. It is found in the melanosome. The protein resides in the membrane raft. Its function is as follows. May act as a scaffolding protein within caveolar membranes, functionally participating in formation of caveolae or caveolae-like vesicles. In Homo sapiens (Human), this protein is Flotillin-1 (FLOT1).